Here is a 417-residue protein sequence, read N- to C-terminus: Mast cell carboxypeptidase A (417 aa).

The first 15 residues, 1–15 (MRLILPVGLIATTLA), serve as a signal peptide directing secretion. Residues 16 to 109 (IAPVRFDREK…IEKQFDVKED (94 aa)) constitute a propeptide, activation peptide. Residues 118 to 412 (KYNNWEKIVA…LAVKFIAKYI (295 aa)) enclose the Peptidase M14 domain. Intrachain disulfides connect cysteine 173/cysteine 186 and cysteine 245/cysteine 268. Zn(2+) is bound by residues histidine 176 and glutamate 179. Position 304 (histidine 304) interacts with Zn(2+). Glutamate 378 (proton donor/acceptor) is an active-site residue.

Belongs to the peptidase M14 family. It depends on Zn(2+) as a cofactor.

The protein localises to the cytoplasmic vesicle. Its subcellular location is the secretory vesicle. It catalyses the reaction Release of a C-terminal amino acid, but little or no action with -Asp, -Glu, -Arg, -Lys or -Pro.. The sequence is that of Mast cell carboxypeptidase A (CPA3) from Homo sapiens (Human).